A 286-amino-acid chain; its full sequence is Beta-lactamase SHV-2 (286 aa).

The N-terminal stretch at 1–21 (MRYIRLCIISLLATLPLAVHA) is a signal peptide. Residue Ser66 is the Acyl-ester intermediate of the active site. A disulfide bond links Cys73 and Cys119. Residue Glu164 is the Proton acceptor of the active site. 230-232 (KTG) is a binding site for substrate.

This sequence belongs to the class-A beta-lactamase family.

It carries out the reaction a beta-lactam + H2O = a substituted beta-amino acid. Functionally, this enzyme hydrolyzes cefotaxime, ceftazidime and other broad spectrum cephalosporins. The sequence is that of Beta-lactamase SHV-2 (bla) from Klebsiella pneumoniae.